A 782-amino-acid polypeptide reads, in one-letter code: General transcription and DNA repair factor IIH helicase/translocase subunit XPB (782 aa).

A compositionally biased stretch (basic and acidic residues) spans 1-11 (MGKRDRADRDK). 2 disordered regions span residues 1–51 (MGKR…ESGT) and 220–240 (ISKTAEGSGGPSTSRVTDPQG). A Nuclear localization signal motif is present at residues 6–18 (RADRDKKKSRKRH). Residues 21 to 30 (DEEDDEEDAP) show a composition bias toward acidic residues. In terms of domain architecture, Helicase ATP-binding spans 327–488 (MFGNGRARSG…DLNFLIGPKL (162 aa)). 340 to 347 (LPCGAGKS) contacts ATP. The DEVH box signature appears at 441–444 (DEVH). Positions 542-702 (RACQFLIKFH…LAGMEEEDLA (161 aa)) constitute a Helicase C-terminal domain. Ser686 bears the Phosphoserine mark. Phosphoserine; by CK2 is present on Ser751.

The protein belongs to the helicase family. RAD25/XPB subfamily. As to quaternary structure, component of the 7-subunit TFIIH core complex composed of XPB/ERCC3, XPD/ERCC2, GTF2H1, GTF2H2, GTF2H3, GTF2H4 and GTF2H5, which is active in NER. The core complex associates with the 3-subunit CDK-activating kinase (CAK) module composed of CCNH/cyclin H, CDK7 and MNAT1 to form the 10-subunit holoenzyme (holo-TFIIH) active in transcription. Interacts with PUF60. Interacts with ATF7IP. Interacts with KAT2A; leading to KAT2A recruitment to promoters and acetylation of histones. Part of TBP-based Pol II pre-initiation complex (PIC), in which Pol II core assembles with general transcription factors and other specific initiation factors including GTF2E1, GTF2E2, GTF2F1, GTF2F2, TCEA1, ERCC2, ERCC3, GTF2H2, GTF2H3, GTF2H4, GTF2H5, GTF2A1, GTF2A2, GTF2B and TBP; this large multi-subunit PIC complex mediates DNA unwinding and targets Pol II core to the transcription start site where the first phosphodiester bond forms. Phosphorylation on Ser-751 by CK2 controls the 5'-excision activity of ERCC1-XPF endonuclease; phosphorylated protein inhibits the excision activity and thus NER. Dephosphorylation reactivates the 5'-excision step. Phosphorylation has no effect on transcription or the 3'-5' helicase activity.

It localises to the nucleus. It catalyses the reaction Couples ATP hydrolysis with the unwinding of duplex DNA by translocating in the 3'-5' direction.. The enzyme catalyses ATP + H2O = ADP + phosphate + H(+). With respect to regulation, phosphorylation on Ser-751 by CK2 controls the 5'-excision activity of ERCC1-XPF endonuclease; phosphorylated protein inhibits the excision activity and thus NER. ATPase activity is stimulated by TFIIH subunit p52 (GTF2H4). DNA translocase activity by this subunit in TFIIH is stimulated by XPA, ERCC5/XPG and XFP plus ERCC1. ATP-dependent 3'-5' DNA helicase/translocase; binds dsDNA rather than ssDNA, unzipping it in a translocase rather than classical helicase activity. Component of the general transcription and DNA repair factor IIH (TFIIH) core complex. When complexed to CDK-activating kinase (CAK), involved in RNA transcription by RNA polymerase II. The ATPase activity of XPB/ERCC3, but not its helicase activity, is required for DNA opening; it may wrap around the damaged DNA wedging it open, causing localized melting and twisting that allows XPD/ERCC2 helicase to anchor. The ATP-dependent helicase activity of XPB/ERCC3 may be required for promoter escape. Also involved in transcription-coupled nucleotide excision repair (NER) of damaged DNA. In NER, TFIIH acts by opening DNA around the lesion to allow the excision of the damaged oligonucleotide and its replacement by a new DNA fragment. The structure of the TFIIH transcription complex differs from the NER-TFIIH complex; large movements by XPD/ERCC2 and XPB/ERCC3 are stabilized by XPA. The polypeptide is General transcription and DNA repair factor IIH helicase/translocase subunit XPB (ERCC3) (Macaca fascicularis (Crab-eating macaque)).